The primary structure comprises 660 residues: uncharacterized protein (660 aa).

The disordered stretch occupies residues 1 to 660 (MGTPCQSARG…RNPGCPRTWR (660 aa)). Residues 67-80 (RPGGGNRVGAGRGR) are compositionally biased toward gly residues. Positions 104–116 (SNPTGGCSDPQRS) are enriched in polar residues. Tandem repeats lie at residues 149–273 (SARN…GCPR), 274–398 (SARN…GCPR), 399–523 (SARN…GCPR), and 524–648 (SARN…GCPR). Positions 149-648 (SARNPGCPRT…THRRPPGCPR (500 aa)) are 4 X 125 AA tandem repeats. Low complexity-rich tracts occupy residues 177–196 (RPSG…GTPA), 302–321 (RPSG…GTPA), 427–446 (RPSG…GTPA), and 552–571 (RPSG…GTPA).

This is an uncharacterized protein from Homo sapiens (Human).